A 1305-amino-acid chain; its full sequence is Contactin-associated protein like 5-4 (1305 aa).

The N-terminal stretch at Met-1–Thr-24 is a signal peptide. Residues Ala-25–Ala-1237 are Extracellular-facing. In terms of domain architecture, F5/8 type C spans Cys-30 to Cys-174. An intrachain disulfide couples Cys-30 to Cys-174. Laminin G-like domains lie at Ile-180 to Cys-360 and Pro-367 to Cys-544. An N-linked (GlcNAc...) asparagine glycan is attached at Asn-282. A disulfide bridge links Cys-329 with Cys-360. The N-linked (GlcNAc...) asparagine glycan is linked to Asn-496. 3 disulfides stabilise this stretch: Cys-512/Cys-544, Cys-550/Cys-561, and Cys-555/Cys-570. The EGF-like 1 domain maps to Ile-546–His-583. N-linked (GlcNAc...) asparagine glycosylation is present at Asn-571. Cysteines 572 and 582 form a disulfide. Residues Asp-584 to Trp-790 enclose the Fibrinogen C-terminal domain. An N-linked (GlcNAc...) asparagine glycan is attached at Asn-622. Positions Asn-791–Cys-956 constitute a Laminin G-like 3 domain. 4 disulfide bridges follow: Cys-929/Cys-956, Cys-960/Cys-973, Cys-967/Cys-982, and Cys-984/Cys-994. The EGF-like 2 domain maps to Leu-957–Gln-995. A Laminin G-like 4 domain is found at Glu-1014–Cys-1198. Asn-1057 carries N-linked (GlcNAc...) asparagine glycosylation. Cysteines 1163 and 1198 form a disulfide. The chain crosses the membrane as a helical span at residues Val-1238 to Ile-1258. Topologically, residues His-1259–Ile-1305 are cytoplasmic.

The protein belongs to the neurexin family.

It localises to the membrane. Its function is as follows. May play a role in the correct development and proper functioning of the peripheral and central nervous system and be involved in cell adhesion and intercellular communication. The protein is Contactin-associated protein like 5-4 (Cntnap5d) of Rattus norvegicus (Rat).